The sequence spans 98 residues: HssA/B-like protein 36 (98 aa).

Residues 1–29 are disordered; that stretch reads MTLFSSISSISNPMTSSKSSISSFGSGTS.

It belongs to the hssA/B family.

This Dictyostelium discoideum (Social amoeba) protein is HssA/B-like protein 36 (hssl36).